A 199-amino-acid chain; its full sequence is Pyridoxine/pyridoxamine 5'-phosphate oxidase (199 aa).

FMN-binding positions include 44–49 (RTVLLK), 59–60 (YT), Lys-66, and Gln-91. Lys-49 contributes to the substrate binding site. Substrate contacts are provided by Tyr-109, Arg-113, and Ser-117. FMN-binding positions include 126–127 (QS) and Trp-171. A substrate-binding site is contributed by 177-179 (RLH). Arg-181 is a binding site for FMN.

It belongs to the pyridoxamine 5'-phosphate oxidase family. In terms of assembly, homodimer. FMN is required as a cofactor.

It catalyses the reaction pyridoxamine 5'-phosphate + O2 + H2O = pyridoxal 5'-phosphate + H2O2 + NH4(+). The enzyme catalyses pyridoxine 5'-phosphate + O2 = pyridoxal 5'-phosphate + H2O2. The protein operates within cofactor metabolism; pyridoxal 5'-phosphate salvage; pyridoxal 5'-phosphate from pyridoxamine 5'-phosphate: step 1/1. It participates in cofactor metabolism; pyridoxal 5'-phosphate salvage; pyridoxal 5'-phosphate from pyridoxine 5'-phosphate: step 1/1. Catalyzes the oxidation of either pyridoxine 5'-phosphate (PNP) or pyridoxamine 5'-phosphate (PMP) into pyridoxal 5'-phosphate (PLP). This chain is Pyridoxine/pyridoxamine 5'-phosphate oxidase, found in Xanthomonas campestris pv. campestris (strain 8004).